Consider the following 299-residue polypeptide: Aspartate carbamoyltransferase catalytic subunit (299 aa).

Positions 54 and 55 each coordinate carbamoyl phosphate. Lys-83 provides a ligand contact to L-aspartate. Carbamoyl phosphate is bound by residues Arg-104, His-132, and Gln-135. Residues Arg-165 and Arg-222 each contribute to the L-aspartate site. Carbamoyl phosphate contacts are provided by Leu-261 and Pro-262.

Belongs to the aspartate/ornithine carbamoyltransferase superfamily. ATCase family. Heterooligomer of catalytic and regulatory chains.

The catalysed reaction is carbamoyl phosphate + L-aspartate = N-carbamoyl-L-aspartate + phosphate + H(+). Its pathway is pyrimidine metabolism; UMP biosynthesis via de novo pathway; (S)-dihydroorotate from bicarbonate: step 2/3. In terms of biological role, catalyzes the condensation of carbamoyl phosphate and aspartate to form carbamoyl aspartate and inorganic phosphate, the committed step in the de novo pyrimidine nucleotide biosynthesis pathway. The sequence is that of Aspartate carbamoyltransferase catalytic subunit from Archaeoglobus fulgidus (strain ATCC 49558 / DSM 4304 / JCM 9628 / NBRC 100126 / VC-16).